Reading from the N-terminus, the 122-residue chain is Large ribosomal subunit protein uL14 (122 aa).

Belongs to the universal ribosomal protein uL14 family. As to quaternary structure, part of the 50S ribosomal subunit. Forms a cluster with proteins L3 and L19. In the 70S ribosome, L14 and L19 interact and together make contacts with the 16S rRNA in bridges B5 and B8.

Binds to 23S rRNA. Forms part of two intersubunit bridges in the 70S ribosome. The polypeptide is Large ribosomal subunit protein uL14 (Desulforudis audaxviator (strain MP104C)).